A 136-amino-acid polypeptide reads, in one-letter code: ATP synthase epsilon chain (136 aa).

The disordered stretch occupies residues 88–136 (DASSAESDLQAARNEVSKMEGQPASADKVKAQQSLDRARARVQAAKNQD).

It belongs to the ATPase epsilon chain family. As to quaternary structure, F-type ATPases have 2 components, CF(1) - the catalytic core - and CF(0) - the membrane proton channel. CF(1) has five subunits: alpha(3), beta(3), gamma(1), delta(1), epsilon(1). CF(0) has three main subunits: a, b and c.

Its subcellular location is the cellular thylakoid membrane. Produces ATP from ADP in the presence of a proton gradient across the membrane. This is ATP synthase epsilon chain from Synechococcus sp. (strain WH7803).